A 503-amino-acid chain; its full sequence is Cytochrome P450 71B6 (503 aa).

Residues 10 to 30 (TELLPWLLLLLIPPLLIFFLL) form a helical membrane-spanning segment. Position 446 (Cys-446) interacts with heme.

The protein belongs to the cytochrome P450 family. It depends on heme as a cofactor.

The protein resides in the membrane. The sequence is that of Cytochrome P450 71B6 (CYP71B6) from Arabidopsis thaliana (Mouse-ear cress).